The chain runs to 497 residues: Zinc finger CCCH domain-containing protein 22 (497 aa).

The C3H1-type zinc-finger motif lies at 136 to 163 (SESMMICKFFMQQRCRFGSSCRSSHGLD). Residues 236–281 (AQMTDDDGEEEEEEDEQQSASDSEDSVSSDYDEGSPQGIGFLESTN) are disordered. A compositionally biased stretch (acidic residues) spans 239-268 (TDDDGEEEEEEDEQQSASDSEDSVSSDYDE). The G-patch domain maps to 300–346 (TRGIASKMMASMGYREGMGLGVSGQGILNPILVKVLPAKRSLDYALE). The tract at residues 352–387 (ECKSEKQKKKRSRGGKRKRGKKFAEAAKAAKQEEES) is disordered. Basic residues predominate over residues 357–372 (KQKKKRSRGGKRKRGK). The span at 373–387 (KFAEAAKAAKQEEES) shows a compositional bias: basic and acidic residues.

The protein is Zinc finger CCCH domain-containing protein 22 of Arabidopsis thaliana (Mouse-ear cress).